The sequence spans 358 residues: Peptide chain release factor 1 (358 aa).

Residue glutamine 233 is modified to N5-methylglutamine.

This sequence belongs to the prokaryotic/mitochondrial release factor family. Methylated by PrmC. Methylation increases the termination efficiency of RF1.

Its subcellular location is the cytoplasm. In terms of biological role, peptide chain release factor 1 directs the termination of translation in response to the peptide chain termination codons UAG and UAA. The polypeptide is Peptide chain release factor 1 (Geobacillus sp. (strain WCH70)).